The primary structure comprises 363 residues: Hydroxycarboxylic acid receptor 2 (363 aa).

The Extracellular portion of the chain corresponds to 1-33 (MNRHHLQDHFLEIDKKNCCVFRDDFIVKVLPPV). A helical membrane pass occupies residues 34–54 (LGLEFIFGLLGNGLALWIFCF). Topologically, residues 55–63 (HLKSWKSSR) are cytoplasmic. The chain crosses the membrane as a helical span at residues 64–84 (IFLFNLAVADFLLIICLPFLM). Residues 85 to 102 (DNYVRRWDWKFGDIPCRL) lie on the Extracellular side of the membrane. A disulfide bond links Cys-100 and Cys-177. The chain crosses the membrane as a helical span at residues 103-123 (MLFMLAMNRQGSIIFLTVVAV). Residues 124 to 142 (DRYFRVVHPHHALNKISNR) are Cytoplasmic-facing. Residues 143-163 (TAAIISCLLWGITIGLTVHLL) form a helical membrane-spanning segment. The Extracellular portion of the chain corresponds to 164–192 (KKKMPIQNGGANLCSSFSICHTFQWHEAM). The helical transmembrane segment at 193–213 (FLLEFFLPLGIILFCSARIIW) threads the bilayer. Over 214–229 (SLRQRQMDRHAKIKRA) the chain is Cytoplasmic. A helical membrane pass occupies residues 230-250 (ITFIMVVAIVFVICFLPSVVV). Residues 251-273 (RIRIFWLLHTSGTQNCEVYRSVD) lie on the Extracellular side of the membrane. A helical membrane pass occupies residues 274–294 (LAFFITLSFTYMNSMLDPVVY). Residues 295 to 363 (YFSSPSFPNF…SPSYLGPTSP (69 aa)) lie on the Cytoplasmic side of the membrane. The interval 319 to 363 (GEPDNNRSTSVELTGDPNKTRGAPEALMANSGEPWSPSYLGPTSP) is disordered. Ser-328 is subject to Phosphoserine.

The protein belongs to the G-protein coupled receptor 1 family. As to expression, expression largely restricted to adipose tissue and spleen. Expressed on mature neutrophils but not on immature neutrophils or eosinophils.

It is found in the cell membrane. Acts as a high affinity receptor for both nicotinic acid (also known as niacin) and (D)-beta-hydroxybutyrate and mediates increased adiponectin secretion and decreased lipolysis through G(i)-protein-mediated inhibition of adenylyl cyclase. This pharmacological effect requires nicotinic acid doses that are much higher than those provided by a normal diet. Mediates nicotinic acid-induced apoptosis in mature neutrophils. Receptor activation by nicotinic acid results in reduced cAMP levels which may affect activity of cAMP-dependent protein kinase A and phosphorylation of target proteins, leading to neutrophil apoptosis. The rank order of potency for the displacement of nicotinic acid binding is 5-methyl pyrazole-3-carboxylic acid = pyridine-3-acetic acid &gt; acifran &gt; 5-methyl nicotinic acid = acipimox &gt;&gt; nicotinuric acid = nicotinamide. The chain is Hydroxycarboxylic acid receptor 2 (HCAR2) from Homo sapiens (Human).